The chain runs to 156 residues: Egg-lysin (156 aa).

A signal peptide spans 1-18 (MKLLVLCVFAMMATLAVS).

In terms of assembly, monomer. Homodimer. Molecules associate into dimers and then rapidly dissociate again. Interacts (as a monomer) with the egg vitelline layer protein VERL (via VERL repeats); each VERL chain can bind multiple copies of lysin. As to expression, sperm.

The protein resides in the cytoplasmic vesicle. It localises to the secretory vesicle. It is found in the acrosome lumen. Creates a 3 um hole in the egg vitelline layer through which the sperm passes. Does not have enzyme activity. Species-specific interaction between the sperm protein lysin and the egg protein VERL exposes a basic surface on lysin that may dissociate the egg vitelline layer via electrostatic repulsion. Plays a role in ensuring species-specific fertilization. The polypeptide is Egg-lysin (Haliotis cracherodii (Black abalone)).